The following is a 392-amino-acid chain: S-adenosylmethionine decarboxylase proenzyme (392 aa).

Active-site residues include Glu43 and Glu46. Ser100 acts as the Schiff-base intermediate with substrate; via pyruvic acid in catalysis. The residue at position 100 (Ser100) is a Pyruvic acid (Ser); by autocatalysis. Cys114 serves as the catalytic Proton donor; for catalytic activity. Catalysis depends on proton acceptor; for processing activity residues Ser264 and His277.

It belongs to the eukaryotic AdoMetDC family. Pyruvate serves as cofactor. Is synthesized initially as an inactive proenzyme. Formation of the active enzyme involves a self-maturation process in which the active site pyruvoyl group is generated from an internal serine residue via an autocatalytic post-translational modification. Two non-identical subunits are generated from the proenzyme in this reaction, and the pyruvate is formed at the N-terminus of the alpha chain, which is derived from the carboxyl end of the proenzyme. The post-translation cleavage follows an unusual pathway, termed non-hydrolytic serinolysis, in which the side chain hydroxyl group of the serine supplies its oxygen atom to form the C-terminus of the beta chain, while the remainder of the serine residue undergoes an oxidative deamination to produce ammonia and the pyruvoyl group blocking the N-terminus of the alpha chain.

The catalysed reaction is S-adenosyl-L-methionine + H(+) = S-adenosyl 3-(methylsulfanyl)propylamine + CO2. It participates in amine and polyamine biosynthesis; S-adenosylmethioninamine biosynthesis; S-adenosylmethioninamine from S-adenosyl-L-methionine: step 1/1. The chain is S-adenosylmethionine decarboxylase proenzyme from Leishmania infantum.